Here is a 232-residue protein sequence, read N- to C-terminus: Phosphatidylserine decarboxylase proenzyme (232 aa).

S190 acts as the Schiff-base intermediate with substrate; via pyruvic acid in catalysis. A Pyruvic acid (Ser); by autocatalysis modification is found at S190.

This sequence belongs to the phosphatidylserine decarboxylase family. PSD-A subfamily. As to quaternary structure, heterodimer of a large membrane-associated beta subunit and a small pyruvoyl-containing alpha subunit. It depends on pyruvate as a cofactor. In terms of processing, is synthesized initially as an inactive proenzyme. Formation of the active enzyme involves a self-maturation process in which the active site pyruvoyl group is generated from an internal serine residue via an autocatalytic post-translational modification. Two non-identical subunits are generated from the proenzyme in this reaction, and the pyruvate is formed at the N-terminus of the alpha chain, which is derived from the carboxyl end of the proenzyme. The post-translation cleavage follows an unusual pathway, termed non-hydrolytic serinolysis, in which the side chain hydroxyl group of the serine supplies its oxygen atom to form the C-terminus of the beta chain, while the remainder of the serine residue undergoes an oxidative deamination to produce ammonia and the pyruvoyl prosthetic group on the alpha chain.

The protein resides in the cell membrane. The enzyme catalyses a 1,2-diacyl-sn-glycero-3-phospho-L-serine + H(+) = a 1,2-diacyl-sn-glycero-3-phosphoethanolamine + CO2. Its pathway is phospholipid metabolism; phosphatidylethanolamine biosynthesis; phosphatidylethanolamine from CDP-diacylglycerol: step 2/2. Catalyzes the formation of phosphatidylethanolamine (PtdEtn) from phosphatidylserine (PtdSer). This Bartonella bacilliformis (strain ATCC 35685 / KC583 / Herrer 020/F12,63) protein is Phosphatidylserine decarboxylase proenzyme.